Reading from the N-terminus, the 107-residue chain is uncharacterized protein (107 aa).

The tract at residues 86-107 (KRAETARLPAATPQKRTGPARG) is disordered.

This is an uncharacterized protein from Saccharomyces cerevisiae (strain ATCC 204508 / S288c) (Baker's yeast).